Here is a 691-residue protein sequence, read N- to C-terminus: Elongation factor G (691 aa).

Positions 8–282 (ERVRNIGIAA…AVVDYLPAPV (275 aa)) constitute a tr-type G domain. GTP-binding positions include 17–24 (AHIDAGKT), 81–85 (DTPGH), and 135–138 (NKMD).

This sequence belongs to the TRAFAC class translation factor GTPase superfamily. Classic translation factor GTPase family. EF-G/EF-2 subfamily.

Its subcellular location is the cytoplasm. Its function is as follows. Catalyzes the GTP-dependent ribosomal translocation step during translation elongation. During this step, the ribosome changes from the pre-translocational (PRE) to the post-translocational (POST) state as the newly formed A-site-bound peptidyl-tRNA and P-site-bound deacylated tRNA move to the P and E sites, respectively. Catalyzes the coordinated movement of the two tRNA molecules, the mRNA and conformational changes in the ribosome. The chain is Elongation factor G from Prochlorococcus marinus (strain MIT 9312).